We begin with the raw amino-acid sequence, 593 residues long: Proline dehydrogenase 1, mitochondrial (593 aa).

A disordered region spans residues 24 to 44; that stretch reads PAAREQPAAGPGAEPVCGPAE. Residues Lys-368 and Lys-479 each carry the N6-acetyllysine modification.

The protein belongs to the proline oxidase family. Requires FAD as cofactor.

It is found in the mitochondrion matrix. It carries out the reaction L-proline + a quinone = (S)-1-pyrroline-5-carboxylate + a quinol + H(+). Its pathway is amino-acid degradation; L-proline degradation into L-glutamate; L-glutamate from L-proline: step 1/2. Functionally, converts proline to delta-1-pyrroline-5-carboxylate. This chain is Proline dehydrogenase 1, mitochondrial, found in Bos taurus (Bovine).